Here is a 128-residue protein sequence, read N- to C-terminus: Nucleoside diphosphate kinase B (128 aa).

Methionine 1 carries the post-translational modification N-acetylmethionine. Positions 9, 39, 70, 81, and 91 each coordinate ATP. Histidine 94 functions as the Pros-phosphohistidine intermediate in the catalytic mechanism.

Belongs to the NDK family. Mg(2+) serves as cofactor.

The protein localises to the cytoplasm. The protein resides in the nucleus. Its subcellular location is the cell projection. It is found in the lamellipodium. It localises to the ruffle. It carries out the reaction a 2'-deoxyribonucleoside 5'-diphosphate + ATP = a 2'-deoxyribonucleoside 5'-triphosphate + ADP. The enzyme catalyses a ribonucleoside 5'-diphosphate + ATP = a ribonucleoside 5'-triphosphate + ADP. Its function is as follows. Major role in the synthesis of nucleoside triphosphates other than ATP. In Merluccius bilinearis (Silver hake), this protein is Nucleoside diphosphate kinase B (nme2).